The chain runs to 480 residues: tRNA (uracil-5-)-methyltransferase homolog B (480 aa).

Q299, E349, and N399 together coordinate S-adenosyl-L-methionine. C427 acts as the Nucleophile in catalysis. The Proton acceptor role is filled by E473.

Belongs to the class I-like SAM-binding methyltransferase superfamily. RNA M5U methyltransferase family.

The protein resides in the mitochondrion. It carries out the reaction uridine(54) in tRNA + S-adenosyl-L-methionine = 5-methyluridine(54) in tRNA + S-adenosyl-L-homocysteine + H(+). The enzyme catalyses a uridine in 12S rRNA + S-adenosyl-L-methionine = a 5-methyluridine in 12S rRNA + S-adenosyl-L-homocysteine + H(+). Mitochondrial S-adenosyl-L-methionine-dependent methyltransferase that catalyzes the formation of 5-methyl-uridine in tRNAs and 12S rRNA. Catalyzes the methylation of uridine at position 54 (m5U54) in all tRNAs. Specifically methylates the uridine in position 429 of 12S rRNA (m5U429). Does not affect RNA stability or mitochondrial translation. The chain is tRNA (uracil-5-)-methyltransferase homolog B (trmt2b) from Danio rerio (Zebrafish).